The primary structure comprises 403 residues: Formate-dependent phosphoribosylglycinamide formyltransferase (403 aa).

N(1)-(5-phospho-beta-D-ribosyl)glycinamide-binding positions include 27 to 28 (EL) and Glu-87. ATP is bound by residues Arg-120, Lys-161, 166–171 (SSGKGQ), 201–204 (EGFV), and Glu-209. The 195-residue stretch at 125 to 319 (RLAAEELGLP…EFELHARAIL (195 aa)) folds into the ATP-grasp domain. Mg(2+) contacts are provided by Glu-278 and Glu-290. N(1)-(5-phospho-beta-D-ribosyl)glycinamide is bound by residues Asp-297, Lys-366, and 373-374 (RR). A disordered region spans residues 382-403 (GPDVETARSRAREAASRVEPVA). Residues 386-397 (ETARSRAREAAS) are compositionally biased toward basic and acidic residues.

It belongs to the PurK/PurT family. As to quaternary structure, homodimer.

It catalyses the reaction N(1)-(5-phospho-beta-D-ribosyl)glycinamide + formate + ATP = N(2)-formyl-N(1)-(5-phospho-beta-D-ribosyl)glycinamide + ADP + phosphate + H(+). It participates in purine metabolism; IMP biosynthesis via de novo pathway; N(2)-formyl-N(1)-(5-phospho-D-ribosyl)glycinamide from N(1)-(5-phospho-D-ribosyl)glycinamide (formate route): step 1/1. Functionally, involved in the de novo purine biosynthesis. Catalyzes the transfer of formate to 5-phospho-ribosyl-glycinamide (GAR), producing 5-phospho-ribosyl-N-formylglycinamide (FGAR). Formate is provided by PurU via hydrolysis of 10-formyl-tetrahydrofolate. The protein is Formate-dependent phosphoribosylglycinamide formyltransferase of Rhodococcus jostii (strain RHA1).